We begin with the raw amino-acid sequence, 350 residues long: Nicotinate-nucleotide--dimethylbenzimidazole phosphoribosyltransferase (350 aa).

Residue Glu316 is the Proton acceptor of the active site.

The protein belongs to the CobT family.

It catalyses the reaction 5,6-dimethylbenzimidazole + nicotinate beta-D-ribonucleotide = alpha-ribazole 5'-phosphate + nicotinate + H(+). It participates in nucleoside biosynthesis; alpha-ribazole biosynthesis; alpha-ribazole from 5,6-dimethylbenzimidazole: step 1/2. Catalyzes the synthesis of alpha-ribazole-5'-phosphate from nicotinate mononucleotide (NAMN) and 5,6-dimethylbenzimidazole (DMB). The chain is Nicotinate-nucleotide--dimethylbenzimidazole phosphoribosyltransferase from Pseudomonas syringae pv. syringae (strain B728a).